Reading from the N-terminus, the 233-residue chain is UPF0725 protein At4g17990 (233 aa).

The protein belongs to the UPF0725 (EMB2204) family.

This is UPF0725 protein At4g17990 from Arabidopsis thaliana (Mouse-ear cress).